The primary structure comprises 1005 residues: MTTEVGSVSEVKKDSSQLGTDATKEKPKEVAENQQNQSSDPEEEKGSQPPPAAESQSSLRRQKREKETSESRGISRFIPPWLKKQKSYTLVVAKDGGDKKEPTQAVVEEQVLDKEEPLPEEQRQAKGDAEEMAQKKQEIKVEVKEEKPSVSKEEKPSVSKVEMQPTELVSKEREEKVKETQEDKLEGGAAKRETKEVQTNELKAEKASQKVTKKTKTVQCKVTLLDGTEYSCDLEKHAKGQVLFDKVCEHLNLLEKDYFGLLFQESPEQKNWLDPAKEIKRQLRNLPWLFTFNVKFYPPDPSQLTEDITRYFLCLQLRQDIASGRLPCSFVTHALLGSYTLQAELGDYDPEEHGSIDLSEFQFAPTQTKELEEKVAELHKTHRGLSPAQADSQFLENAKRLSMYGVDLHHAKDSEGVDIKLGVCANGLLIYKDRLRINRFAWPKILKISYKRSNFYIKVRPAELEQFESTIGFKLPNHRAAKRLWKVCVEHHTFYRLVSPEQPPKAKFLTLGSKFRYSGRTQAQTRQASTLIDRPAPHFERTSSKRVSRSLDGAPIGVMDQSLMKDFPGAAGEISAYGPGLVSIAVVQDGDGRREVRSPTKAPHLQLIEGKKNSLRVEGDNIYVRHSNLMLEELDKAQEDILKHQASISELKRNFMESTPEPRPNEWEKRRITPLSLQTQGSSHETLNIVEEKKRAEVGKDERVITEEMNGKEISPGSGPGEIRKVEPVTQKDSTSLSSESSSSSSESEEEDVGEYRPHHRVTEGTIREEQEYEEEVEEEPRPAAKVVEREEAVPEASPVTQAGASVITVETVIQENVGAQKIPGEKSVHEGALKQDMGEEAEEEPQKVNGEVSHVDIDVLPQIICCSEPPVVKTEMVTISDASQRTEISTKEVPIVQTETKTITYESPQIDGGAGGDSGTLLTAQTITSESVSTTTTTHITKTVKGGISETRIEKRIVITGDGDIDHDQALAQAIREAREQHPDMSVTRVVVHKETELAEEGED.

The segment at 1-80 (MTTEVGSVSE…SRGISRFIPP (80 aa)) is disordered. The residue at position 2 (Thr2) is an N-acetylthreonine. Residue Ser7 is modified to Phosphoserine. Positions 22-31 (ATKEKPKEVA) are enriched in basic and acidic residues. Ser39, Ser58, and Ser87 each carry phosphoserine. Thr89 bears the Phosphothreonine mark. The disordered stretch occupies residues 93 to 196 (AKDGGDKKEP…GGAAKRETKE (104 aa)). 2 stretches are compositionally biased toward basic and acidic residues: residues 111–157 (VLDK…EKPS) and 169–196 (VSKE…ETKE). Residues Lys140 and Lys144 each participate in a glycyl lysine isopeptide (Lys-Gly) (interchain with G-Cter in SUMO2) cross-link. A phosphoserine mark is found at Ser170, Ser208, Ser386, Ser402, Ser499, Ser550, Ser562, Ser575, Ser598, and Ser614. In terms of domain architecture, FERM spans 218–499 (VQCKVTLLDG…EHHTFYRLVS (282 aa)). The tract at residues 502–610 (QPPKAKFLTL…KAPHLQLIEG (109 aa)) is hydrophilic. A spectrin--actin-binding region spans residues 611–676 (KKNSLRVEGD…WEKRRITPLS (66 aa)). Phosphotyrosine is present on Tyr623. Phosphoserine occurs at positions 627 and 647. The disordered stretch occupies residues 652–800 (KRNFMESTPE…EEAVPEASPV (149 aa)). Over residues 675–686 (LSLQTQGSSHET) the composition is skewed to polar residues. Positions 690–711 (VEEKKRAEVGKDERVITEEMNG) are enriched in basic and acidic residues. Phosphoserine is present on residues Ser715 and Ser718. Residues 734 to 746 (STSLSSESSSSSS) show a composition bias toward low complexity. Basic and acidic residues-rich tracts occupy residues 754-770 (GEYR…IREE) and 780-793 (EPRP…REEA). Thr763 bears the Phosphothreonine mark. Residue Ser828 is modified to Phosphoserine. The tract at residues 855-1005 (HVDIDVLPQI…ETELAEEGED (151 aa)) is C-terminal (CTD).

In terms of assembly, interacts with FCGR1A. Interacts with TRPC4. Interacts (via CTD domain) with FKBP2. Interacts with NUMA1; this interaction is negatively regulated by CDK1 during metaphase and promotes anaphase-specific localization of NUMA1 in symmetrically dividing cells. Widely expressed.

It localises to the cytoplasm. The protein localises to the cytoskeleton. The protein resides in the cell cortex. It is found in the cell membrane. Its function is as follows. Required for dynein-dynactin complex and NUMA1 recruitment at the mitotic cell cortex during anaphase. This chain is Band 4.1-like protein 2, found in Homo sapiens (Human).